Reading from the N-terminus, the 254-residue chain is MARNIQSLERAAAMLRLLAGGERRLGLSDIASSLGLAKGTAHGILRTLQQEGFVEQDDASGRYQLGAELLRLGTTYLDVHELRARALVWTDDLARSSGESVHLGVLHQQGVLIVHHVFRPDDSRQVLEIGAMQPLHSTALGKVLSAYDPVAHSEALEADRKAFTDRTVCEPDSFEHVLDITRARGYAADVEETWEGIASIAAPIHDRRRMPVGAVGITGAVERLCREGELRPELVAAVRDCARAVSRDLGAGRF.

An HTH iclR-type domain is found at 5–67 (IQSLERAAAM…DASGRYQLGA (63 aa)). The segment at residues 27 to 46 (LSDIASSLGLAKGTAHGILR) is a DNA-binding region (H-T-H motif). The region spanning 82-251 (LRARALVWTD…ARAVSRDLGA (170 aa)) is the IclR-ED domain.

Its function is as follows. May be an activator protein for the gylABX operon. The chain is Glycerol operon regulatory protein (gylR) from Streptomyces coelicolor (strain ATCC BAA-471 / A3(2) / M145).